The sequence spans 240 residues: Uridylate kinase (240 aa).

12 to 15 contributes to the ATP binding site; that stretch reads KLSG. Residues 20–25 form an involved in allosteric activation by GTP region; sequence GDQGYG. Gly54 contributes to the UMP binding site. Positions 55 and 59 each coordinate ATP. UMP is bound by residues Asp74 and 135 to 142; that span reads TGNPYFST. Asn163, Tyr169, and Asp172 together coordinate ATP.

This sequence belongs to the UMP kinase family. Homohexamer.

It localises to the cytoplasm. The enzyme catalyses UMP + ATP = UDP + ADP. It functions in the pathway pyrimidine metabolism; CTP biosynthesis via de novo pathway; UDP from UMP (UMPK route): step 1/1. With respect to regulation, allosterically activated by GTP. Inhibited by UTP. In terms of biological role, catalyzes the reversible phosphorylation of UMP to UDP. This chain is Uridylate kinase, found in Oceanobacillus iheyensis (strain DSM 14371 / CIP 107618 / JCM 11309 / KCTC 3954 / HTE831).